We begin with the raw amino-acid sequence, 101 residues long: MAKQSMKAREVKRVALADKYFAKRAELKAIISDVNASDEDRWNAVLKLQTLPRDSSPSRQRNRCRQTGRPHGYVGKFGLSRIKLREAAMRGEVPGLKKASW.

The protein belongs to the universal ribosomal protein uS14 family. In terms of assembly, part of the 30S ribosomal subunit. Contacts proteins S3 and S10.

Binds 16S rRNA, required for the assembly of 30S particles and may also be responsible for determining the conformation of the 16S rRNA at the A site. This chain is Small ribosomal subunit protein uS14, found in Citrobacter koseri (strain ATCC BAA-895 / CDC 4225-83 / SGSC4696).